Reading from the N-terminus, the 222-residue chain is Beta-amylase (222 aa).

A substrate-binding site is contributed by T36. E74 serves as the catalytic Proton acceptor. Residues N75–A76 and R114 each bind substrate.

This sequence belongs to the glycosyl hydrolase 14 family.

It catalyses the reaction Hydrolysis of (1-&gt;4)-alpha-D-glucosidic linkages in polysaccharides so as to remove successive maltose units from the non-reducing ends of the chains.. This chain is Beta-amylase (BMY1), found in Secale cereale (Rye).